Here is a 621-residue protein sequence, read N- to C-terminus: MALLQISEPGKSLAPHQRRIAVGIDLGTTNSLVAIVRDALPKVLPDAQGRELLPSVIRYLPNGRTQAGFEALESVVIDPKNTIVSVKRFMGRGLLDVEHIESAPYDFVDQPGMLKLRTVAGDKSPIEVSAEILARLRQLAEDSVSDEIVGAVITVPAYFDDAQRQATKDAAKLAGIEVLRLLNEPTAAAITYGLDNASEGVYAVYDLGGGTFDISILRMSRGVFEVLATGGDSALGGDDFDHRLYCWVIEQAKLPPLSIHDHRTLLQACKHAKEQLSHNPLARVHETLADGTVVNVGISQAQFFEITQNLVTKTLMTCKKALRDAGLKAEDVKGVVMVGGSTRMPNVQRAVAELFGTQPLNNLNPDQVVALGAAMQADLLAGNQSKDDEWLLLDVIPLSLGIETMGGLVEKSIPRNTPIPVARAQDFTTFKDGQTALAIQVVQGERELAQDCRSLGRFELRGIPAMAAGAARIRVTFQVDADGFLSVSATEQGSGVKASIDIKPSYGLTDAEITRMLQDGFASAKEDLLSRSLREEQVNAQRLLDAVQTALDSDRSLLNAEEQAAIDREMTTLQKILNEETNSAVVRKAVDQAVKATDDFAQKRMNASIQKALSGKNVTEI.

The protein belongs to the heat shock protein 70 family.

Functionally, chaperone involved in the maturation of iron-sulfur cluster-containing proteins. Has a low intrinsic ATPase activity which is markedly stimulated by HscB. This chain is Chaperone protein HscA homolog, found in Polynucleobacter necessarius subsp. necessarius (strain STIR1).